Here is a 266-residue protein sequence, read N- to C-terminus: MIQITVVQIDNYGPWTVTPNPRRESDLQALQSRLYCDMNLQFGAHRGLAFYTRFDNIIAITNGIDLETHKRIQNSVKNRYPFTVSMAVASAETAYGAQKLATKTIQEYGSAQDDVRKEVLDVANEFVSNGYVQLAHVDINDITGKLTDLETAYDTYLSVQKTKLKLMEELKKYDSLGFFIGGDNFMCPCNGMSEKDFLCMFEDIKESCGIELKAGIGIGKTAEDASDLADIGLEVIREGKTDFQVYTLKQDVEERKDVTYNYMCPI.

Belongs to the archaeal-type GTP cyclohydrolase family.

The catalysed reaction is GTP + 3 H2O = 2-amino-5-formylamino-6-(5-phospho-D-ribosylamino)pyrimidin-4(3H)-one + 2 phosphate + 2 H(+). Functionally, catalyzes the formation of 2-amino-5-formylamino-6-ribofuranosylamino-4(3H)-pyrimidinone ribonucleotide monophosphate and inorganic phosphate from GTP. Also has an independent pyrophosphate phosphohydrolase activity. The protein is GTP cyclohydrolase III of Methanococcus maripaludis (strain C5 / ATCC BAA-1333).